We begin with the raw amino-acid sequence, 397 residues long: Argininosuccinate synthase (397 aa).

7 to 15 is an ATP binding site; it reads LYSGGLDTS. Residue tyrosine 83 participates in L-citrulline binding. Glycine 113 contacts ATP. L-aspartate is bound by residues threonine 115, asparagine 119, and aspartate 120. An L-citrulline-binding site is contributed by asparagine 119. Positions 123, 169, 178, 253, and 265 each coordinate L-citrulline.

The protein belongs to the argininosuccinate synthase family. Type 1 subfamily. Homotetramer.

It localises to the cytoplasm. It carries out the reaction L-citrulline + L-aspartate + ATP = 2-(N(omega)-L-arginino)succinate + AMP + diphosphate + H(+). The protein operates within amino-acid biosynthesis; L-arginine biosynthesis; L-arginine from L-ornithine and carbamoyl phosphate: step 2/3. The polypeptide is Argininosuccinate synthase (Thermoplasma volcanium (strain ATCC 51530 / DSM 4299 / JCM 9571 / NBRC 15438 / GSS1)).